Here is a 127-residue protein sequence, read N- to C-terminus: Large ribosomal subunit protein uL18 (127 aa).

It belongs to the universal ribosomal protein uL18 family. Part of the 50S ribosomal subunit; part of the 5S rRNA/L5/L18/L25 subcomplex. Contacts the 5S and 23S rRNAs.

Functionally, this is one of the proteins that bind and probably mediate the attachment of the 5S RNA into the large ribosomal subunit, where it forms part of the central protuberance. This is Large ribosomal subunit protein uL18 from Streptomyces coelicolor (strain ATCC BAA-471 / A3(2) / M145).